The following is a 482-amino-acid chain: tRNA sulfurtransferase (482 aa).

The region spanning 61–165 is the THUMP domain; it reads LAIRDALTRI…DDRLLLIKGR (105 aa). Residues 183 to 184, Lys265, Gly287, and Gln296 each bind ATP; that span reads LI. The cysteines at positions 344 and 456 are disulfide-linked. The Rhodanese domain maps to 404-482; it reads FGPNDVILDI…GFQNVKVYRP (79 aa). Cys456 acts as the Cysteine persulfide intermediate in catalysis.

Belongs to the ThiI family.

The protein localises to the cytoplasm. It carries out the reaction [ThiI sulfur-carrier protein]-S-sulfanyl-L-cysteine + a uridine in tRNA + 2 reduced [2Fe-2S]-[ferredoxin] + ATP + H(+) = [ThiI sulfur-carrier protein]-L-cysteine + a 4-thiouridine in tRNA + 2 oxidized [2Fe-2S]-[ferredoxin] + AMP + diphosphate. It catalyses the reaction [ThiS sulfur-carrier protein]-C-terminal Gly-Gly-AMP + S-sulfanyl-L-cysteinyl-[cysteine desulfurase] + AH2 = [ThiS sulfur-carrier protein]-C-terminal-Gly-aminoethanethioate + L-cysteinyl-[cysteine desulfurase] + A + AMP + 2 H(+). It functions in the pathway cofactor biosynthesis; thiamine diphosphate biosynthesis. Its function is as follows. Catalyzes the ATP-dependent transfer of a sulfur to tRNA to produce 4-thiouridine in position 8 of tRNAs, which functions as a near-UV photosensor. Also catalyzes the transfer of sulfur to the sulfur carrier protein ThiS, forming ThiS-thiocarboxylate. This is a step in the synthesis of thiazole, in the thiamine biosynthesis pathway. The sulfur is donated as persulfide by IscS. This is tRNA sulfurtransferase from Citrobacter koseri (strain ATCC BAA-895 / CDC 4225-83 / SGSC4696).